The sequence spans 273 residues: MSLSNAPLGQHVAYPSQYDPGLLFPIPRATNRASLQLGATLPFTGVDLWNAYELSWLDARGKPRVAMATFSFPADSPNIVESKSFKLYLNSFNQTRLPNAQALRDRLERDLAAAAGAPVGLEFISPQRFGELNMAELDGIYIDKLDIEIDTYEPAPQLLQCAPGDEVEETLATRLLKSNCPVTGQPDWASLQVRYRGRPIDRAALLKYVVSFRQHAEFHEHCVERIFGDIMRACQPRQLTVYARYTRRGGLDINPWRSNFESAPPADVRTARQ.

Residue 80-82 coordinates substrate; it reads VES. 82–83 serves as a coordination point for NADPH; the sequence is SK. The active-site Thioimide intermediate is the Cys180. Asp187 serves as the catalytic Proton donor. 219–220 is a substrate binding site; the sequence is HE. 248-249 provides a ligand contact to NADPH; that stretch reads RG.

Belongs to the GTP cyclohydrolase I family. QueF type 2 subfamily. As to quaternary structure, homodimer.

Its subcellular location is the cytoplasm. It carries out the reaction 7-aminomethyl-7-carbaguanine + 2 NADP(+) = 7-cyano-7-deazaguanine + 2 NADPH + 3 H(+). It functions in the pathway tRNA modification; tRNA-queuosine biosynthesis. Functionally, catalyzes the NADPH-dependent reduction of 7-cyano-7-deazaguanine (preQ0) to 7-aminomethyl-7-deazaguanine (preQ1). The protein is NADPH-dependent 7-cyano-7-deazaguanine reductase of Bordetella bronchiseptica (strain ATCC BAA-588 / NCTC 13252 / RB50) (Alcaligenes bronchisepticus).